The following is a 94-amino-acid chain: Large ribosomal subunit protein bL25 (94 aa).

The protein belongs to the bacterial ribosomal protein bL25 family. Part of the 50S ribosomal subunit; part of the 5S rRNA/L5/L18/L25 subcomplex. Contacts the 5S rRNA. Binds to the 5S rRNA independently of L5 and L18.

Its function is as follows. This is one of the proteins that binds to the 5S RNA in the ribosome where it forms part of the central protuberance. This chain is Large ribosomal subunit protein bL25, found in Proteus mirabilis (strain HI4320).